A 579-amino-acid polypeptide reads, in one-letter code: Plastidial pyruvate kinase 2 (579 aa).

A chloroplast-targeting transit peptide spans 1 to 63 (MAQVVATRSI…SRRVVDTTVR (63 aa)). Residues 6 to 24 (ATRSIQGSMLSPNGGSVST) are compositionally biased toward polar residues. The segment at 6–26 (ATRSIQGSMLSPNGGSVSTRS) is disordered. R140 serves as a coordination point for substrate. Residues N142, S144, D175, and T176 each contribute to the K(+) site. 142-145 (NMSH) provides a ligand contact to ATP. Residue R182 coordinates ATP. K325 is a binding site for substrate. E327 provides a ligand contact to Mg(2+). The substrate site is built by G350, D351, and T383. Mg(2+) is bound at residue D351.

The protein belongs to the pyruvate kinase family. In terms of assembly, oligomer of alpha and beta subunits. Mg(2+) is required as a cofactor. The cofactor is K(+). In terms of tissue distribution, mostly expressed in seeds, and, to a lower extent, in roots, leaves (veins and trichomes), inflorescences, siliques, pollen (grains and tubes) and flowers (sepals and petals).

It is found in the plastid. The protein localises to the chloroplast stroma. It localises to the mitochondrion. It catalyses the reaction pyruvate + ATP = phosphoenolpyruvate + ADP + H(+). Its pathway is carbohydrate degradation; glycolysis; pyruvate from D-glyceraldehyde 3-phosphate: step 5/5. Required for plastidial pyruvate kinase activity. Involved in seed oil accumulation, embryo development and seed storage compounds mobilization upon germination. This is Plastidial pyruvate kinase 2 (PKP2) from Arabidopsis thaliana (Mouse-ear cress).